A 424-amino-acid chain; its full sequence is Serine hydroxymethyltransferase (424 aa).

(6S)-5,6,7,8-tetrahydrofolate is bound by residues Leu126 and 130 to 132 (GHL). At Lys235 the chain carries N6-(pyridoxal phosphate)lysine. 359-361 (SPF) lines the (6S)-5,6,7,8-tetrahydrofolate pocket.

Belongs to the SHMT family. In terms of assembly, homodimer. The cofactor is pyridoxal 5'-phosphate.

The protein resides in the cytoplasm. It catalyses the reaction (6R)-5,10-methylene-5,6,7,8-tetrahydrofolate + glycine + H2O = (6S)-5,6,7,8-tetrahydrofolate + L-serine. The protein operates within one-carbon metabolism; tetrahydrofolate interconversion. Its pathway is amino-acid biosynthesis; glycine biosynthesis; glycine from L-serine: step 1/1. Its function is as follows. Catalyzes the reversible interconversion of serine and glycine with tetrahydrofolate (THF) serving as the one-carbon carrier. This reaction serves as the major source of one-carbon groups required for the biosynthesis of purines, thymidylate, methionine, and other important biomolecules. Also exhibits THF-independent aldolase activity toward beta-hydroxyamino acids, producing glycine and aldehydes, via a retro-aldol mechanism. The chain is Serine hydroxymethyltransferase from Prochlorococcus marinus (strain MIT 9303).